Here is a 224-residue protein sequence, read N- to C-terminus: Ribonuclease HII (224 aa).

One can recognise an RNase H type-2 domain in the interval 1–210; the sequence is MKVAGADEAG…AKKIEEKFKR (210 aa). The a divalent metal cation site is built by aspartate 7, glutamate 8, and aspartate 105.

This sequence belongs to the RNase HII family. The cofactor is Mn(2+). Requires Mg(2+) as cofactor.

It localises to the cytoplasm. The enzyme catalyses Endonucleolytic cleavage to 5'-phosphomonoester.. In terms of biological role, endonuclease that specifically degrades the RNA of RNA-DNA hybrids. In Pyrococcus abyssi (strain GE5 / Orsay), this protein is Ribonuclease HII (rnhB).